A 477-amino-acid polypeptide reads, in one-letter code: Sensor protein kinase PmrB (477 aa).

2 helical membrane passes run 13–33 (LLVN…ALTY) and 161–181 (LLLF…GGLV). In terms of domain architecture, HAMP spans 186–238 (ARGLAPLREVQAEVQQRSARHLQPIAVEAVPLEIRGLIDELNLLLERLRTALE). Positions 246-459 (DAAHEIRTPL…EVQVFLPKTQ (214 aa)) constitute a Histidine kinase domain. His-249 is subject to Phosphohistidine; by autocatalysis. Residues 455–477 (LPKTQPDATRPPARGPDSGRSHI) form a disordered region.

The protein localises to the membrane. It carries out the reaction ATP + protein L-histidine = ADP + protein N-phospho-L-histidine.. Its function is as follows. Member of the two-component regulatory system PmrA/PmrB that plays a role in the regulation of resistance towards polymyxin B and cationic antimicrobial peptides in response to limiting concentrations of Mg(2+). Also autoregulates its own pmrAB operon under Mg(2+)-limiting conditions. May function as a membrane-associated protein kinase that phosphorylates PmrA in response to environmental signals leading to activation of specific gene promoters. This chain is Sensor protein kinase PmrB (pmrB), found in Pseudomonas aeruginosa (strain ATCC 15692 / DSM 22644 / CIP 104116 / JCM 14847 / LMG 12228 / 1C / PRS 101 / PAO1).